Reading from the N-terminus, the 127-residue chain is Small ribosomal subunit protein uS13 (127 aa).

Positions 95-127 (GLPLRGQRTKTNARTRRGKKGAAIGGKKKATKK) are disordered.

This sequence belongs to the universal ribosomal protein uS13 family. As to quaternary structure, part of the 30S ribosomal subunit. Forms a loose heterodimer with protein S19. Forms two bridges to the 50S subunit in the 70S ribosome.

Its function is as follows. Located at the top of the head of the 30S subunit, it contacts several helices of the 16S rRNA. In the 70S ribosome it contacts the 23S rRNA (bridge B1a) and protein L5 of the 50S subunit (bridge B1b), connecting the 2 subunits; these bridges are implicated in subunit movement. Contacts the tRNAs in the A and P-sites. The polypeptide is Small ribosomal subunit protein uS13 (Herpetosiphon aurantiacus (strain ATCC 23779 / DSM 785 / 114-95)).